The primary structure comprises 163 residues: MERFIFAALLVVALSLSGTGADPQCLPGWSSSDGYCYKVFKEYKRWDDAEMFCRQEVEGGHLVSIHSKTEAKFLARLVFRKFILLNVWIGLSSPGKHGIWRWSDGSSFYYTSWAFGEPNNFLWNEYCVGLMSITGHRKWSDQNCRSKRYFICKAQPQGEGSTW.

An N-terminal signal peptide occupies residues 1–21 (MERFIFAALLVVALSLSGTGA). Intrachain disulfides connect Cys-25-Cys-36, Cys-53-Cys-152, and Cys-127-Cys-144. The 122-residue stretch at 32 to 153 (SDGYCYKVFK…CRSKRYFICK (122 aa)) folds into the C-type lectin domain. A Mannose-binding motif is present at residues 117 to 119 (EPN). Positions 125 and 141 each coordinate Ca(2+).

This sequence belongs to the true venom lectin family. In terms of tissue distribution, expressed by the venom gland.

Its subcellular location is the secreted. Its function is as follows. Mannose-binding lectin which recognizes specific carbohydrate structures and agglutinates a variety of animal cells by binding to cell-surface glycoproteins and glycolipids. May be a calcium-dependent lectin. This chain is C-type lectin lectoxin-Lio1, found in Erythrolamprus poecilogyrus (Water snake).